Reading from the N-terminus, the 366-residue chain is Ribosomal RNA large subunit methyltransferase M (366 aa).

S-adenosyl-L-methionine-binding positions include Ser188, 221–224 (CPGG), Asp240, Asp260, and Asp277. Lys306 acts as the Proton acceptor in catalysis.

Belongs to the class I-like SAM-binding methyltransferase superfamily. RNA methyltransferase RlmE family. RlmM subfamily. In terms of assembly, monomer.

The protein localises to the cytoplasm. It carries out the reaction cytidine(2498) in 23S rRNA + S-adenosyl-L-methionine = 2'-O-methylcytidine(2498) in 23S rRNA + S-adenosyl-L-homocysteine + H(+). Its function is as follows. Catalyzes the 2'-O-methylation at nucleotide C2498 in 23S rRNA. The protein is Ribosomal RNA large subunit methyltransferase M of Shigella flexneri serotype 5b (strain 8401).